Reading from the N-terminus, the 759-residue chain is Protein transport protein sec23-1 (759 aa).

Zn(2+) is bound by residues cysteine 56, cysteine 60, cysteine 79, and cysteine 82.

Belongs to the SEC23/SEC24 family. SEC23 subfamily. As to quaternary structure, the COPII coat is composed of at least 5 proteins: the sec23/24 complex, the sec13/31 complex, and the protein sar1.

The protein resides in the cytoplasm. It is found in the cytoplasmic vesicle. Its subcellular location is the COPII-coated vesicle membrane. It localises to the endoplasmic reticulum membrane. The protein localises to the golgi apparatus membrane. Its function is as follows. Component of the coat protein complex II (COPII) which promotes the formation of transport vesicles from the endoplasmic reticulum (ER). The coat has two main functions, the physical deformation of the endoplasmic reticulum membrane into vesicles and the selection of cargo molecules. This chain is Protein transport protein sec23-1 (sec231), found in Schizosaccharomyces pombe (strain 972 / ATCC 24843) (Fission yeast).